The following is a 370-amino-acid chain: Putative alanine racemase 2 (370 aa).

The Proton acceptor; specific for D-alanine role is filled by Lys-38. N6-(pyridoxal phosphate)lysine is present on Lys-38. Tyr-266 (proton acceptor; specific for L-alanine) is an active-site residue.

This sequence belongs to the alanine racemase family. Pyridoxal 5'-phosphate is required as a cofactor.

The catalysed reaction is L-alanine = D-alanine. The chain is Putative alanine racemase 2 (alr2) from Schizosaccharomyces pombe (strain 972 / ATCC 24843) (Fission yeast).